A 508-amino-acid polypeptide reads, in one-letter code: tRNA (guanine(37)-N(1))-methyltransferase (508 aa).

Residues 1–53 (MKFNFWKGLWKPKSLTPTLSHRLYRRMYTPQPPLNREMTVLDRSKFTVSLNLA) constitute a mitochondrion transit peptide. His-253 provides a ligand contact to S-adenosyl-L-methionine. The segment covering 267–284 (RERKQQERAKRENHEKST) has biased composition (basic and acidic residues). A disordered region spans residues 267–291 (RERKQQERAKRENHEKSTETAVEPD). Residues 323 to 324 (DL), 351 to 352 (DG), and Asn-402 contribute to the S-adenosyl-L-methionine site.

The protein belongs to the class I-like SAM-binding methyltransferase superfamily. TRM5/TYW2 family. As to quaternary structure, monomer.

Its subcellular location is the mitochondrion matrix. It is found in the nucleus. It localises to the cytoplasm. It carries out the reaction guanosine(37) in tRNA + S-adenosyl-L-methionine = N(1)-methylguanosine(37) in tRNA + S-adenosyl-L-homocysteine + H(+). Functionally, specifically methylates the N1 position of guanosine-37 in various cytoplasmic and mitochondrial tRNAs. Methylation is not dependent on the nature of the nucleoside 5' of the target nucleoside. This is the first step in the biosynthesis of wybutosine (yW), a modified base adjacent to the anticodon of tRNAs and required for accurate decoding. The sequence is that of tRNA (guanine(37)-N(1))-methyltransferase from Yarrowia lipolytica (strain CLIB 122 / E 150) (Yeast).